Reading from the N-terminus, the 159-residue chain is Ribosomal RNA large subunit methyltransferase H (159 aa).

Residues Leu76, Gly107, and 126-131 (LSKLTM) contribute to the S-adenosyl-L-methionine site.

This sequence belongs to the RNA methyltransferase RlmH family. In terms of assembly, homodimer.

The protein resides in the cytoplasm. The enzyme catalyses pseudouridine(1915) in 23S rRNA + S-adenosyl-L-methionine = N(3)-methylpseudouridine(1915) in 23S rRNA + S-adenosyl-L-homocysteine + H(+). Specifically methylates the pseudouridine at position 1915 (m3Psi1915) in 23S rRNA. The sequence is that of Ribosomal RNA large subunit methyltransferase H from Acinetobacter baumannii (strain SDF).